Consider the following 193-residue polypeptide: uncharacterized protein (193 aa).

This is an uncharacterized protein from Haemophilus influenzae (strain ATCC 51907 / DSM 11121 / KW20 / Rd).